A 275-amino-acid chain; its full sequence is Methylthioribulose-1-phosphate dehydratase (275 aa).

C125 serves as a coordination point for substrate. Residues H143 and H145 each coordinate Zn(2+). The active-site Proton donor/acceptor is the E168. H233 provides a ligand contact to Zn(2+).

The protein belongs to the aldolase class II family. MtnB subfamily. Zn(2+) serves as cofactor.

The protein localises to the cytoplasm. It catalyses the reaction 5-(methylsulfanyl)-D-ribulose 1-phosphate = 5-methylsulfanyl-2,3-dioxopentyl phosphate + H2O. The protein operates within amino-acid biosynthesis; L-methionine biosynthesis via salvage pathway; L-methionine from S-methyl-5-thio-alpha-D-ribose 1-phosphate: step 2/6. Catalyzes the dehydration of methylthioribulose-1-phosphate (MTRu-1-P) into 2,3-diketo-5-methylthiopentyl-1-phosphate (DK-MTP-1-P). This chain is Methylthioribulose-1-phosphate dehydratase, found in Lodderomyces elongisporus (strain ATCC 11503 / CBS 2605 / JCM 1781 / NBRC 1676 / NRRL YB-4239) (Yeast).